A 298-amino-acid chain; its full sequence is MPEGKIIKALSGFYYVLDESEDSDKVIQCRGRGIFRKNKITPLVGDYVVYQAENDKEGYLMEIKERTNELIRPPICNVDQAVLVFSAVQPSFSTALLDRFLVLVEANDIQPIICITKMDLIEDQDTEDTIQAYAEDYRNIGYDVYLTSSKDQDSLADIIPHFQDKTTVFAGQSGVGKSSLLNAISPELGLRTNEISEHLGRGKHTTRHVELIHTSGGLVADTPGFSSLEFTDIEEEELGYTFPDIREKSSSCKFRGCLHLKEPKCAVKQAVEDGELKQYRYDHYVEFMTEIKDRKPRY.

Positions 67-228 (TNELIRPPIC…VADTPGFSSL (162 aa)) constitute a CP-type G domain. 116-119 (TKMD) serves as a coordination point for GTP. Threonine 166 carries the phosphothreonine modification. Residue 171–179 (GQSGVGKSS) coordinates GTP. The Zn(2+) site is built by cysteine 252, cysteine 257, histidine 259, and cysteine 265.

This sequence belongs to the TRAFAC class YlqF/YawG GTPase family. RsgA subfamily. As to quaternary structure, monomer, but able to form dimers. Associates with 30S ribosomal subunit; a phospho-mimetic mutation increases association. Probably binds 16S rRNA. Zn(2+) serves as cofactor. Post-translationally, in vitro phosphorylated mostly on Thr (with lower signal on Ser) by PrkC in the presence of poly-L-Lys or myelin basic protein, dephosphorylated by PrpC. Most in vitro phosphorylation occurs on Thr-166, in vivo phosphorylation has not been detected, but it might vary during the cell cycle.

Its subcellular location is the cytoplasm. In terms of biological role, one of several proteins that assist in the late maturation steps of the functional core of the 30S ribosomal subunit. Helps release RbfA from mature subunits. May play a role in the assembly of ribosomal proteins into the subunit. Circularly permuted GTPase with a low level of activity and slow catalytic turnover, does not act on ATP. GTPase activity is stimulated by the presence of 30S or 70S ribosomes, phosphorylation increases stimulation. Depletion results in increased sensitivity to protein synthesis inhibitors that block the peptide channel or peptidyl transferase center on the ribosome, suggesting this protein functions in conjunction with the ribosome in vivo. Decreasing levels of protein lead to an increase in free 30S and 50S ribosomal subunits and a decrease in assembled 70S ribosomes. Suggested to serve as a specific transcription factor for proteins involved in late stages of peptidoglycan synthesis. The polypeptide is Small ribosomal subunit biogenesis GTPase RsgA (Bacillus subtilis (strain 168)).